Consider the following 255-residue polypeptide: tRNA (guanine-N(1)-)-methyltransferase (255 aa).

S-adenosyl-L-methionine-binding positions include glycine 113 and 133–138 (IGDYVL).

This sequence belongs to the RNA methyltransferase TrmD family. Homodimer.

Its subcellular location is the cytoplasm. The enzyme catalyses guanosine(37) in tRNA + S-adenosyl-L-methionine = N(1)-methylguanosine(37) in tRNA + S-adenosyl-L-homocysteine + H(+). Specifically methylates guanosine-37 in various tRNAs. This chain is tRNA (guanine-N(1)-)-methyltransferase, found in Salmonella paratyphi A (strain ATCC 9150 / SARB42).